The sequence spans 215 residues: Pyridoxine/pyridoxamine 5'-phosphate oxidase (215 aa).

Residues 9–12 (RREY) and Lys69 each bind substrate. FMN-binding positions include 64 to 69 (RILLLK), 79 to 80 (FT), Lys86, and Gln108. Substrate is bound by residues Tyr126, Arg130, and Ser134. Residues 143–144 (QS) and Trp188 contribute to the FMN site. 194 to 196 (RLH) serves as a coordination point for substrate. Arg198 serves as a coordination point for FMN.

It belongs to the pyridoxamine 5'-phosphate oxidase family. As to quaternary structure, homodimer. FMN is required as a cofactor.

It carries out the reaction pyridoxamine 5'-phosphate + O2 + H2O = pyridoxal 5'-phosphate + H2O2 + NH4(+). The catalysed reaction is pyridoxine 5'-phosphate + O2 = pyridoxal 5'-phosphate + H2O2. It functions in the pathway cofactor metabolism; pyridoxal 5'-phosphate salvage; pyridoxal 5'-phosphate from pyridoxamine 5'-phosphate: step 1/1. The protein operates within cofactor metabolism; pyridoxal 5'-phosphate salvage; pyridoxal 5'-phosphate from pyridoxine 5'-phosphate: step 1/1. In terms of biological role, catalyzes the oxidation of either pyridoxine 5'-phosphate (PNP) or pyridoxamine 5'-phosphate (PMP) into pyridoxal 5'-phosphate (PLP). In Pseudomonas paraeruginosa (strain DSM 24068 / PA7) (Pseudomonas aeruginosa (strain PA7)), this protein is Pyridoxine/pyridoxamine 5'-phosphate oxidase.